Here is a 34-residue protein sequence, read N- to C-terminus: Photosystem II reaction center protein M (34 aa).

A helical membrane pass occupies residues 5–25 (ILAFIATALFILVPTAFLLII).

Belongs to the PsbM family. As to quaternary structure, PSII is composed of 1 copy each of membrane proteins PsbA, PsbB, PsbC, PsbD, PsbE, PsbF, PsbH, PsbI, PsbJ, PsbK, PsbL, PsbM, PsbT, PsbX, PsbY, PsbZ, Psb30/Ycf12, at least 3 peripheral proteins of the oxygen-evolving complex and a large number of cofactors. It forms dimeric complexes.

The protein resides in the plastid. It is found in the chloroplast thylakoid membrane. In terms of biological role, one of the components of the core complex of photosystem II (PSII). PSII is a light-driven water:plastoquinone oxidoreductase that uses light energy to abstract electrons from H(2)O, generating O(2) and a proton gradient subsequently used for ATP formation. It consists of a core antenna complex that captures photons, and an electron transfer chain that converts photonic excitation into a charge separation. This subunit is found at the monomer-monomer interface. The sequence is that of Photosystem II reaction center protein M from Ceratophyllum demersum (Rigid hornwort).